Consider the following 354-residue polypeptide: Vascular endothelial growth factor D (354 aa).

An N-terminal signal peptide occupies residues 1–21; sequence MYREWVVVNVFMMLYVQLVQG. Residues 22–88 constitute a propeptide, or 99 (in a minor form); sequence SSNEHGPVKR…SRSASHRSTR (67 aa). Disulfide bonds link Cys-111–Cys-153, Cys-142–Cys-189, and Cys-146–Cys-191. N-linked (GlcNAc...) asparagine glycosylation is found at Asn-155 and Asn-185. A propeptide spanning residues 206 to 354 is cleaved from the precursor; it reads SIQIPEEDRC…AQGPHSRKNP (149 aa). Residues 222-237 form a 1; approximate repeat; that stretch reads CPIDMLWDSNKCKCVL. Positions 222–318 are 4 X 16 AA repeats of C-X(10)-C-X-C-X(1,3)-C; it reads CPIDMLWDSN…PDTCSCEDRC (97 aa). Repeat copies occupy residues 258–273, 277–293, and 301–318. An N-linked (GlcNAc...) asparagine glycan is attached at Asn-287.

The protein belongs to the PDGF/VEGF growth factor family. Homodimer; non-covalent and antiparallel. In terms of processing, undergoes a complex proteolytic maturation which generates a variety of processed secreted forms with increased activity toward VEGFR-3 and VEGFR-2. VEGF-D first form an antiparallel homodimer linked by disulfide bonds before secretion. The fully processed VEGF-D is composed mostly of two VEGF homology domains (VHDs) bound by non-covalent interactions. Highly expressed in lung, heart, small intestine and fetal lung, and at lower levels in skeletal muscle, colon, and pancreas.

Its subcellular location is the secreted. Growth factor active in angiogenesis, lymphangiogenesis and endothelial cell growth, stimulating their proliferation and migration and also has effects on the permeability of blood vessels. May function in the formation of the venous and lymphatic vascular systems during embryogenesis, and also in the maintenance of differentiated lymphatic endothelium in adults. Binds and activates VEGFR-2 (KDR/FLK1) and VEGFR-3 (FLT4) receptors. This Homo sapiens (Human) protein is Vascular endothelial growth factor D.